The chain runs to 566 residues: MKMSRRAYAEMFGPTVGDRVRLADTELFIEVEQDLTTYGEEVKFGGGKVIRDGMGQSQLLADEVADTVITNALIVDWWGIVKADVGLKNGRIWKIGKAGNPDIQPDITIPLGAATEVIAGEGQILTAGGIDTHIHWICPQQVETALMSGVTTMVGGGTGPAAGTSATTVTPGPWHIGTMLQAIDDLPMNIGLLGKGNLSLPDPIREQIKAGVVGLKLHEDWGSTPAAIDNCLSVADEFDVQVAIHTDTLNESGFLEETLAAFKNRTIHTYHTEGAGGGHAPDILKAIGQANVLPSSTNPTRPYTINTIDEHLDMLMVCHHLDPAIAEDVAFAESRIRRETIAAEDILQDLGAIAMMSSDSQAMGRVGEVIIRTWQTAHKMKVQRGALQGDETSHDNSRVKRYIAKYTINPAITHGLSHEIGSVEEGKLADLVLWKPAFFGVKPSMIIKGGMIAAAPMGDINASIPTPQPVHYRPMFGAYPRGVHNTCITFLSQAAIDDGVAEKLKLKKLISPCKNTRQITKADMKHNTYCPVMDVHPETYEVRADGELLTCEPADVLPMAQRYFLF.

Residues 128–566 form the Urease domain; the sequence is GGIDTHIHWI…LPMAQRYFLF (439 aa). Ni(2+)-binding residues include His133, His135, and Lys216. An N6-carboxylysine modification is found at Lys216. His218 is a substrate binding site. Ni(2+) contacts are provided by His245 and His271. The active-site Proton donor is His319. Asp359 serves as a coordination point for Ni(2+).

Belongs to the metallo-dependent hydrolases superfamily. Urease alpha subunit family. As to quaternary structure, heterotrimer of UreA (gamma), UreB (beta) and UreC (alpha) subunits. Three heterotrimers associate to form the active enzyme. Ni cation serves as cofactor. Carboxylation allows a single lysine to coordinate two nickel ions.

Its subcellular location is the cytoplasm. The catalysed reaction is urea + 2 H2O + H(+) = hydrogencarbonate + 2 NH4(+). The protein operates within nitrogen metabolism; urea degradation; CO(2) and NH(3) from urea (urease route): step 1/1. The sequence is that of Urease subunit alpha from Acinetobacter baylyi (strain ATCC 33305 / BD413 / ADP1).